The chain runs to 109 residues: Large ribosomal subunit protein eL42 (109 aa).

Residues 23-53 form a disordered region; that stretch reads VSQYKKSKESTHAQGRRRYDMKQSGFGGQTK. The span at 28–43 shows a compositional bias: basic and acidic residues; the sequence is KSKESTHAQGRRRYDM.

The protein belongs to the eukaryotic ribosomal protein eL42 family.

The protein localises to the cytoplasm. This is Large ribosomal subunit protein eL42 (RPL36A) from Tetrahymena thermophila (strain SB210).